The sequence spans 271 residues: Orotidine 5'-phosphate decarboxylase (271 aa).

The active-site Proton donor is Lys95.

It belongs to the OMP decarboxylase family. Type 2 subfamily.

The catalysed reaction is orotidine 5'-phosphate + H(+) = UMP + CO2. It participates in pyrimidine metabolism; UMP biosynthesis via de novo pathway; UMP from orotate: step 2/2. This is Orotidine 5'-phosphate decarboxylase from Aromatoleum aromaticum (strain DSM 19018 / LMG 30748 / EbN1) (Azoarcus sp. (strain EbN1)).